We begin with the raw amino-acid sequence, 166 residues long: Regulatory protein RecX (166 aa).

This sequence belongs to the RecX family.

The protein resides in the cytoplasm. In terms of biological role, modulates RecA activity. In Shigella boydii serotype 18 (strain CDC 3083-94 / BS512), this protein is Regulatory protein RecX.